The chain runs to 228 residues: uncharacterized protein (228 aa).

This sequence belongs to the HAD-like hydrolase superfamily.

The protein resides in the cytoplasm. It is found in the nucleus. This is an uncharacterized protein from Schizosaccharomyces pombe (strain 972 / ATCC 24843) (Fission yeast).